The sequence spans 333 residues: DNA-directed RNA polymerase subunit alpha (333 aa).

The interval 1–227 (MRKIKVAPFM…VMNKQLSVFN (227 aa)) is alpha N-terminal domain (alpha-NTD). Residues 247 to 333 (ELKPFLAAVD…LVKKLEQLKA (87 aa)) are alpha C-terminal domain (alpha-CTD).

Belongs to the RNA polymerase alpha chain family. In terms of assembly, homodimer. The RNAP catalytic core consists of 2 alpha, 1 beta, 1 beta' and 1 omega subunit. When a sigma factor is associated with the core the holoenzyme is formed, which can initiate transcription.

The enzyme catalyses RNA(n) + a ribonucleoside 5'-triphosphate = RNA(n+1) + diphosphate. Functionally, DNA-dependent RNA polymerase catalyzes the transcription of DNA into RNA using the four ribonucleoside triphosphates as substrates. The protein is DNA-directed RNA polymerase subunit alpha of Sulfurovum sp. (strain NBC37-1).